The primary structure comprises 187 residues: Ubiquinone biosynthesis protein COQ4 homolog, mitochondrial (187 aa).

Zn(2+) contacts are provided by histidine 77, aspartate 78, histidine 81, and glutamate 93.

Belongs to the COQ4 family. In terms of assembly, component of a multi-subunit COQ enzyme complex. The cofactor is Zn(2+).

It is found in the mitochondrion inner membrane. It carries out the reaction a 4-hydroxy-3-methoxy-5-(all-trans-polyprenyl)benzoate + H(+) = a 2-methoxy-6-(all-trans-polyprenyl)phenol + CO2. It participates in cofactor biosynthesis; ubiquinone biosynthesis. Lyase that catalyzes the C1-decarboxylation of 4-hydroxy-3-methoxy-5-(all-trans-polyprenyl)benzoic acid into 2-methoxy-6-(all-trans-polyprenyl)phenol during ubiquinone biosynthesis. This is Ubiquinone biosynthesis protein COQ4 homolog, mitochondrial from Leishmania infantum.